The following is a 26-amino-acid chain: Mu-theraphotoxin-Phlo2a (26 aa).

3 disulfide bridges follow: C2–C16, C9–C21, and C15–C25.

It belongs to the neurotoxin 30 (phrixotoxin) family. In terms of tissue distribution, expressed by the venom gland.

Its subcellular location is the secreted. Functionally, gating-modifier toxin that non-selectively inhibits voltage-gated sodium channel Nav by shifting the threshold for channel activation to more positive potentials. This toxin moderately inhibits human Nav1.2/SCN2A (IC(50)=404 nM), Nav1.5/SCN5A (IC(50)=218 nM) and Nav1.7/SCN9A (IC(50)=333 nM). Inhibition of Nav1.7 is voltage-dependent, with lower inhibition at more positive test pulses. The protein is Mu-theraphotoxin-Phlo2a of Phlogius sp. (Tarantula spider).